The sequence spans 1372 residues: MAYSYTEKKRIRKSFAELPTVMDIPYLLSIQVDSYEQFLQEHKKPKARENTGLQAAYSSIFPIESHSGNAELQFVEYYLGTPEFDERECILRGSTFAAPMRVKIRLIIKDKDSKDKDSKAAIKDIREQSVYMGEMPLMTANGTFIINGTERVIVSQLHRSPGVFFDHDKGKSHSSGKVLYNARIIPYRGSWLDFEFDAKDLVFARIDRRRKLLASIILRALGLSTSEILDLFFDKVRVYKGEEQFEIDLVADRLRGEMAQFDIVTPAGDVVVEQGKRINARRIRQLEEAGMTKISIPDEYLYERILAEDIIVNDEVIARANTLIDHELLVKLSAFEASESIKEFSILFTNDIDQGSYIADTLRADSTSSREEALIEIYKVMRPGEPPTVETAEKLFDSMFFNADRYDLSNVGRMKFNRRLGLDFVDTDDADIQRERSVLTNADIVNVLKELIEIRNGRGEVDDIDHLGNRRIRSVGEMAENQFRVGLVRVERAVKERLSSAESDNLSPQDLINSKPVAAAVKEFFGSSQLSQFMDQNNPLSEVTHKRRVSALGPGGLTRERAGFEVRDVHDTHYGRVCPIETPEGPNIGLINSLATFAKTNSFGFLETPYRRVVDGKVTDVIEYLSAIEEVGTVIAQADSPVTADGALSDEMVSVRSYGEFVRMPPEKVTHMDVSPSQVVSVAAGLIPFLEHDDANRALMGSNMQRQAVPTLRADKPLVGTGMERHVARDSGVCVIAKRGGVIEDVDASRVVVRVNEDEMIAGEAGIDIYNLVKYTRSNQNTCINQRIIVNQGDAIAVGDILADGPSTDLGELALGQNIRIAFMPWNGYNFEDSILLSEKVVKEDRFTTIHIQELTCVARDTKLGTEEITADIPNVGEAALSSLDEAGIVYIGAEVDAGDILVGKVTPKGETQLTPEEKLLRAIFGEKAADVKDTSLRVPTSSKGTVIDVQVFTRDGVEKDARARAIEKSQLDSYRKDLKEELRIFEEAARGRIGNLLDGQKVSGGSGLKAGTVMALADMKDMSLETLLDIQPVEEEISERLTQIAEYLVDKQKDIDVKFAEKKRKLTAGDDLQHGVQKIVKVYLAVKRRIQPGDKMAGRHGNKGVVSRIMPVEDMPYDENGNTVDIVLNPLGVPSRMNIGQVLETHLGMAAKGLGEKIDGMLKSQAAIKDLRDFLDKIYNQVGGEQVDLDSLSDDDIMALADNLRAGVPMGTAVFDGARESQVKDLLELAGMDRDGQQTLYDGRTGQKFDRKVTVGYMYMLKLNHLVDDKMHARSTGSYSLVTQQPLGGKAQFGGQRFGEMEVWALEAYGATYTLQEMLTVKSDDVEGRTRMYKNIVDGEQYMDPGMPESFNVLTKEIKSLGINIELKQSN.

Belongs to the RNA polymerase beta chain family. In terms of assembly, the RNAP catalytic core consists of 2 alpha, 1 beta, 1 beta' and 1 omega subunit. When a sigma factor is associated with the core the holoenzyme is formed, which can initiate transcription.

The catalysed reaction is RNA(n) + a ribonucleoside 5'-triphosphate = RNA(n+1) + diphosphate. DNA-dependent RNA polymerase catalyzes the transcription of DNA into RNA using the four ribonucleoside triphosphates as substrates. This Psychrobacter cryohalolentis (strain ATCC BAA-1226 / DSM 17306 / VKM B-2378 / K5) protein is DNA-directed RNA polymerase subunit beta.